The chain runs to 108 residues: Replication initiation control protein YabA (108 aa).

H83, C85, C99, and C102 together coordinate Zn(2+).

Belongs to the YabA family. In terms of assembly, homotetramer. Interacts with both DnaA and DnaN, acting as a bridge between these two proteins. Requires Zn(2+) as cofactor.

Its subcellular location is the cytoplasm. It localises to the nucleoid. Its function is as follows. Involved in control of chromosome replication initiation. Inhibits the cooperative binding of DnaA to the oriC region, thus negatively regulating initiation of chromosome replication. Inhibits the ability of DnaA-ATP to form a helix on DNA; does not disassemble preformed DnaA-DNA helices. Decreases the residence time of DnaA on the chromosome at its binding sites (oriC, replication forks and promoter-binding sites). Tethers DnaA to the replication machinery via the DNA polymerase beta sliding clamp subunit (dnaN). Associates with oriC and other DnaA targets on the chromosome in a DnaA-dependent manner. This chain is Replication initiation control protein YabA, found in Lactococcus lactis subsp. lactis (strain IL1403) (Streptococcus lactis).